A 395-amino-acid chain; its full sequence is Isoafricanol synthase (395 aa).

Aspartate 95, asparagine 246, serine 250, and glutamate 254 together coordinate Mg(2+). Over residues 346-357 (TEAVSGGRERPW) the composition is skewed to basic and acidic residues. A disordered region spans residues 346–395 (TEAVSGGRERPWARLTGAEDLIRAGRGAPPPPGSGPDTRQPMPSEPSQLA).

This sequence belongs to the terpene synthase family. Mg(2+) serves as cofactor.

It carries out the reaction (2E,6E)-farnesyl diphosphate + H2O = (+)-isoafricanol + diphosphate. In terms of biological role, catalyzes the cyclization of farnesyl diphosphate (FPP) to isoafricanol. The sequence is that of Isoafricanol synthase from Streptomyces malaysiensis.